A 475-amino-acid chain; its full sequence is NADH-ubiquinone oxidoreductase chain 2 (475 aa).

The next 13 membrane-spanning stretches (helical) occupy residues 45-65 (LAVL…GIQY), 82-102 (APIV…LTTT), 112-132 (IALL…VNDL), 133-153 (IPLY…TGVY), 162-182 (AAIL…LSSA), 198-220 (TYYS…ALVF), 240-260 (LYIT…FIYL), 262-282 (IHLF…AVAA), 291-311 (IKSI…TAVL), 318-338 (YIYI…ILAI), 365-385 (LCIA…LPGF), 402-422 (LEAL…AYII), and 447-467 (FIIS…PTLL).

The protein belongs to the complex I subunit 2 family.

The protein resides in the mitochondrion inner membrane. It catalyses the reaction a ubiquinone + NADH + 5 H(+)(in) = a ubiquinol + NAD(+) + 4 H(+)(out). In terms of biological role, core subunit of the mitochondrial membrane respiratory chain NADH dehydrogenase (Complex I) that is believed to belong to the minimal assembly required for catalysis. Complex I functions in the transfer of electrons from NADH to the respiratory chain. The immediate electron acceptor for the enzyme is believed to be ubiquinone. The protein is NADH-ubiquinone oxidoreductase chain 2 (NAD2) of Candida albicans (strain SC5314 / ATCC MYA-2876) (Yeast).